Reading from the N-terminus, the 906-residue chain is Protein translocase subunit SecA (906 aa).

ATP-binding positions include Q86, 104-108, and D511; that span reads GEGKT. Composition is skewed to basic and acidic residues over residues 853–865 and 877–888; these read HESV…RHDE and VRREGPKVKRND. The disordered stretch occupies residues 853-906; the sequence is HESVIDNNQRHDEDEQEEAPKVQQVRREGPKVKRNDPCPCGSGKKYKQCHSKVE. Zn(2+)-binding residues include C890, C892, C901, and H902. Basic residues predominate over residues 896 to 906; the sequence is KKYKQCHSKVE.

It belongs to the SecA family. Monomer and homodimer. Part of the essential Sec protein translocation apparatus which comprises SecA, SecYEG and auxiliary proteins SecDF-YajC and YidC. It depends on Zn(2+) as a cofactor.

It is found in the cell inner membrane. It localises to the cytoplasm. It carries out the reaction ATP + H2O + cellular proteinSide 1 = ADP + phosphate + cellular proteinSide 2.. Part of the Sec protein translocase complex. Interacts with the SecYEG preprotein conducting channel. Has a central role in coupling the hydrolysis of ATP to the transfer of proteins into and across the cell membrane, serving both as a receptor for the preprotein-SecB complex and as an ATP-driven molecular motor driving the stepwise translocation of polypeptide chains across the membrane. The sequence is that of Protein translocase subunit SecA from Francisella tularensis subsp. tularensis (strain WY96-3418).